Reading from the N-terminus, the 142-residue chain is uncharacterized protein (142 aa).

This sequence belongs to the IIV-6 115R family.

This is an uncharacterized protein from Invertebrate iridescent virus 3 (IIV-3).